The following is a 42-amino-acid chain: Photosystem II reaction center protein J (42 aa).

The helical transmembrane segment at 10-30 (IPLWLVGTVVGIAALTLLSVF) threads the bilayer.

It belongs to the PsbJ family. PSII is composed of 1 copy each of membrane proteins PsbA, PsbB, PsbC, PsbD, PsbE, PsbF, PsbH, PsbI, PsbJ, PsbK, PsbL, PsbM, PsbT, PsbX, PsbY, PsbZ, Psb30/Ycf12, at least 3 peripheral proteins of the oxygen-evolving complex and a large number of cofactors. It forms dimeric complexes.

The protein resides in the plastid. Its subcellular location is the chloroplast thylakoid membrane. Its function is as follows. One of the components of the core complex of photosystem II (PSII). PSII is a light-driven water:plastoquinone oxidoreductase that uses light energy to abstract electrons from H(2)O, generating O(2) and a proton gradient subsequently used for ATP formation. It consists of a core antenna complex that captures photons, and an electron transfer chain that converts photonic excitation into a charge separation. This chain is Photosystem II reaction center protein J, found in Tupiella akineta (Green alga).